We begin with the raw amino-acid sequence, 467 residues long: MTIAQEPTALNFECETGNYHTFCPISCVAWLYQKIEDSFFLVIGTKTCGYFLQNAMGVMIFAEPRYAMAELEEGDISAQLNDYAELKRLCEQIKRDRNPSVIVWIGTCTTEIIKMDLEGLAPKLEGELGIPIVVARANGLDYAFTQGEDTVLAAMAHRCPDKAPVAEAEKNERNAVQKLLNFGKKKELVAQEESEYVDHPPLVLFGSLPDPVVTQLTLELKKQGIKVSGWLPAKRFTELPVLEEGYYVAGVNPFLSRTATTLMRRRKCKLIGAPFPIGPDGTRAWIEKICSVFGITPQGLDEREAQIWAGLEDYVKLIRGKSVFFMGDNLLEVSLARFLVRCGMTVQEVGIPYMDKRYQAAELAMLEKACQEMGVPSPKMVEKPDNYNQVQRIYDLKPDLVITGMAHANPLEARGINTKWSVEFTFAQIHGFTNARDILELVTRPLRRNNNLKDLGWDKLVREEAKI.

[4Fe-4S] cluster contacts are provided by Cys-23, Cys-48, and Cys-108.

The protein belongs to the BchN/ChlN family. In terms of assembly, protochlorophyllide reductase is composed of three subunits; ChlL, ChlN and ChlB. Forms a heterotetramer of two ChlB and two ChlN subunits. [4Fe-4S] cluster is required as a cofactor.

It catalyses the reaction chlorophyllide a + oxidized 2[4Fe-4S]-[ferredoxin] + 2 ADP + 2 phosphate = protochlorophyllide a + reduced 2[4Fe-4S]-[ferredoxin] + 2 ATP + 2 H2O. It functions in the pathway porphyrin-containing compound metabolism; chlorophyll biosynthesis (light-independent). Its function is as follows. Component of the dark-operative protochlorophyllide reductase (DPOR) that uses Mg-ATP and reduced ferredoxin to reduce ring D of protochlorophyllide (Pchlide) to form chlorophyllide a (Chlide). This reaction is light-independent. The NB-protein (ChlN-ChlB) is the catalytic component of the complex. This chain is Light-independent protochlorophyllide reductase subunit N, found in Trichormus variabilis (strain ATCC 29413 / PCC 7937) (Anabaena variabilis).